We begin with the raw amino-acid sequence, 831 residues long: MKQKRGKQDVKMVESAPPQLLPKKGRLEISELAPQQRTIRTAEEIEMAYNEAVRKHPFYDNADHTIDFHDATVFRDARGVVGGVLLPGALPAFAATMAADVLRPAAVRTSLRSNMFGGFAPLSGIAGYFDYRGSPVELKCRKTSFTYENVHSWPNVFPMIDYVSAIYKAVFPERWAAQDAAVPDIVRIHGSPFSTLTVNQQFRTASHTDAGDFDMGYGLLAVLEGKFEGLSLALDDFGVCFRMQPRDVLIFNTHFFHSNTEPELNHPKDDWSRLTCVCYYRAALGEPACVAEYERRLARAKEIGASPPPAVDAILQKDNGNNFNKPAPTFTYSLTPFGGAASICSLHCCTAKLLRLHELLLENPTLEVILFGESLRTDDGLPRREKEQLISVHLPVVVKMSPSGGFSELGGALKAAEEKQYFFEEKYLADELGPDLMSMWTQSRAHWLRLVKEDWERLCRRDPERTKFTWNNSSAMNAAFFDLCEVAKQMMIGLLNKETPSSAENHSFWILFAAHLNYACTTENGMPRDAVGMHKLNVKLKDFHFGGTRYLKDMPPEEQERRLERKKRIEEARRRGNAARETHTDNWLLNDTFDYQQEDRKVEFEENGWMTPEAYVKHLGLKPCGDVTAAASPTEPIHVLVVLPRPAAAAPKDVKRDVPLATSEESIRLLMNPAAQRVLTGKARNVTLPSPLSFGGVKITVLFDGDDIDCIHPDFVVLQHLLAAIEEDEAAKARVKYWAHVARYCVFVVETDVRDRRHFLLREEVRVAYEDVAEDCFRSLHAAAYSTKCNRLRTTPSLIALSNSKNIGLRFKFRGSPLNTIALIVVGERLD.

Positions 80–282 (VVGGVLLPGA…RLTCVCYYRA (203 aa)) are thymine dioxygenase. Residues H207, D209, and H257 each contribute to the Fe cation site. R273 contacts 2-oxoglutarate. The segment at 409-578 (LGGALKAAEE…IEEARRRGNA (170 aa)) is DNA-binding JBP1 domain.

The protein belongs to the TET family. JBP1 subfamily. Monomer. Binds to DNA as a monomer. Fe(2+) serves as cofactor.

The protein resides in the nucleus. The catalysed reaction is thymine + 2-oxoglutarate + O2 = 5-hydroxymethyluracil + succinate + CO2. Its function is as follows. Dioxygenase that catalyzes the first step of DNA base J (beta-d-glucosyl-HOMedU) biosynthesis by converting thymine to 5-hydroxymethyluracil (HOMedU). DNA base J is a hypermodified thymidine residue found in the genome of kinetoplastid parasites, which is localized primarily to repetitive DNA, namely the telomeres, and is implicated in the regulation of antigenic variation. Also specifically binds to base J-containing DNA (J-DNA). Involved in propagation and maintenance of DNA base J synthesis initiated by JBP2 by specifically binding already synthesized DNA base J and propagating J synthesis. Thymine dioxygenase activity and J-DNA-binding are independent functions. In Trypanosoma cruzi (strain CL Brener), this protein is Thymine dioxygenase JBP1-B (JBP1B).